The sequence spans 275 residues: Undecaprenyl-diphosphatase (275 aa).

The next 8 helical transmembrane spans lie at 2-22 (LDIF…FLPI), 43-63 (FINM…IVIY), 83-103 (WQIW…GLPL), 111-131 (MTSW…FIVL), 161-181 (VLSM…AMLI), 186-206 (YVAT…ASLL), 225-245 (ILLV…KFLL), and 255-275 (PFGW…LVFA).

The protein belongs to the UppP family.

It is found in the cell membrane. The enzyme catalyses di-trans,octa-cis-undecaprenyl diphosphate + H2O = di-trans,octa-cis-undecaprenyl phosphate + phosphate + H(+). Its function is as follows. Catalyzes the dephosphorylation of undecaprenyl diphosphate (UPP). Confers resistance to bacitracin. The sequence is that of Undecaprenyl-diphosphatase from Lactobacillus delbrueckii subsp. bulgaricus (strain ATCC 11842 / DSM 20081 / BCRC 10696 / JCM 1002 / NBRC 13953 / NCIMB 11778 / NCTC 12712 / WDCM 00102 / Lb 14).